A 590-amino-acid polypeptide reads, in one-letter code: Arginine--tRNA ligase (590 aa).

A 'HIGH' region motif is present at residues 131-141; sequence PNIAKEMHVGH.

Belongs to the class-I aminoacyl-tRNA synthetase family. Monomer.

Its subcellular location is the cytoplasm. It catalyses the reaction tRNA(Arg) + L-arginine + ATP = L-arginyl-tRNA(Arg) + AMP + diphosphate. The sequence is that of Arginine--tRNA ligase from Synechococcus sp. (strain RCC307).